The chain runs to 185 residues: Hypoxanthine/guanine phosphoribosyltransferase (185 aa).

This sequence belongs to the purine/pyrimidine phosphoribosyltransferase family. Archaeal HPRT subfamily. As to quaternary structure, homodimer.

Its subcellular location is the cytoplasm. The enzyme catalyses IMP + diphosphate = hypoxanthine + 5-phospho-alpha-D-ribose 1-diphosphate. The catalysed reaction is GMP + diphosphate = guanine + 5-phospho-alpha-D-ribose 1-diphosphate. It participates in purine metabolism; IMP biosynthesis via salvage pathway; IMP from hypoxanthine: step 1/1. Catalyzes a salvage reaction resulting in the formation of IMP that is energically less costly than de novo synthesis. In Methanococcus maripaludis (strain C5 / ATCC BAA-1333), this protein is Hypoxanthine/guanine phosphoribosyltransferase.